A 344-amino-acid chain; its full sequence is Serpentine receptor class H-72 (344 aa).

A run of 7 helical transmembrane segments spans residues 30-50 (GLAF…FFTG), 66-86 (LSLV…SFFI), 110-132 (TVVQ…TLLF), 155-175 (WLAG…FNLA), 221-241 (SIYM…LVIV), 259-279 (YGLI…SVLI), and 292-312 (LVSI…LLVH).

The protein belongs to the nematode receptor-like protein srh family.

It is found in the membrane. The sequence is that of Serpentine receptor class H-72 (srh-72) from Caenorhabditis elegans.